A 329-amino-acid chain; its full sequence is Phenylalanine--tRNA ligase alpha subunit (329 aa).

Glutamate 254 is a binding site for Mg(2+).

It belongs to the class-II aminoacyl-tRNA synthetase family. Phe-tRNA synthetase alpha subunit type 1 subfamily. In terms of assembly, tetramer of two alpha and two beta subunits. Mg(2+) is required as a cofactor.

It is found in the cytoplasm. It catalyses the reaction tRNA(Phe) + L-phenylalanine + ATP = L-phenylalanyl-tRNA(Phe) + AMP + diphosphate + H(+). This chain is Phenylalanine--tRNA ligase alpha subunit, found in Histophilus somni (strain 2336) (Haemophilus somnus).